The following is an 87-amino-acid chain: Cytochrome c6 (87 aa).

Heme c contacts are provided by cysteine 10, cysteine 13, histidine 14, and methionine 56.

The protein belongs to the cytochrome c family. PetJ subfamily. Monomer. Post-translationally, binds 1 heme c group covalently per subunit.

It localises to the plastid. Its subcellular location is the chloroplast thylakoid lumen. In terms of biological role, functions as an electron carrier between membrane-bound cytochrome b6-f and photosystem I in oxygenic photosynthesis. The protein is Cytochrome c6 (petJ) of Euglena gracilis.